A 449-amino-acid chain; its full sequence is Probable glycine dehydrogenase (decarboxylating) subunit 1 (449 aa).

Belongs to the GcvP family. N-terminal subunit subfamily. In terms of assembly, the glycine cleavage system is composed of four proteins: P, T, L and H. In this organism, the P 'protein' is a heterodimer of two subunits.

The enzyme catalyses N(6)-[(R)-lipoyl]-L-lysyl-[glycine-cleavage complex H protein] + glycine + H(+) = N(6)-[(R)-S(8)-aminomethyldihydrolipoyl]-L-lysyl-[glycine-cleavage complex H protein] + CO2. The glycine cleavage system catalyzes the degradation of glycine. The P protein binds the alpha-amino group of glycine through its pyridoxal phosphate cofactor; CO(2) is released and the remaining methylamine moiety is then transferred to the lipoamide cofactor of the H protein. The chain is Probable glycine dehydrogenase (decarboxylating) subunit 1 from Oceanobacillus iheyensis (strain DSM 14371 / CIP 107618 / JCM 11309 / KCTC 3954 / HTE831).